A 145-amino-acid polypeptide reads, in one-letter code: Ribonuclease HI (145 aa).

The RNase H type-1 domain maps to 1 to 142 (MNQTVYLYTD…ADDLANRGAA (142 aa)). Positions 10, 48, 70, and 134 each coordinate Mg(2+).

Belongs to the RNase H family. Monomer. Mg(2+) serves as cofactor.

The protein localises to the cytoplasm. It catalyses the reaction Endonucleolytic cleavage to 5'-phosphomonoester.. Endonuclease that specifically degrades the RNA of RNA-DNA hybrids. The protein is Ribonuclease HI of Neisseria meningitidis serogroup B (strain ATCC BAA-335 / MC58).